The sequence spans 218 residues: GTP cyclohydrolase 1 (218 aa).

The Zn(2+) site is built by Cys111, His114, and Cys182.

Belongs to the GTP cyclohydrolase I family. As to quaternary structure, toroid-shaped homodecamer, composed of two pentamers of five dimers.

It catalyses the reaction GTP + H2O = 7,8-dihydroneopterin 3'-triphosphate + formate + H(+). It participates in cofactor biosynthesis; 7,8-dihydroneopterin triphosphate biosynthesis; 7,8-dihydroneopterin triphosphate from GTP: step 1/1. This chain is GTP cyclohydrolase 1, found in Buchnera aphidicola subsp. Schizaphis graminum (strain Sg).